Consider the following 578-residue polypeptide: V-type ATP synthase alpha chain (578 aa).

ATP is bound at residue glycine 228–threonine 235.

It belongs to the ATPase alpha/beta chains family.

It carries out the reaction ATP + H2O + 4 H(+)(in) = ADP + phosphate + 5 H(+)(out). Produces ATP from ADP in the presence of a proton gradient across the membrane. The V-type alpha chain is a catalytic subunit. The protein is V-type ATP synthase alpha chain of Thermus thermophilus (strain ATCC BAA-163 / DSM 7039 / HB27).